The following is a 348-amino-acid chain: Hereditary hemochromatosis protein homolog (348 aa).

The signal sequence occupies residues 1–22 (MGPRARPALFFLILLRTVAAQG). Positions 23 to 114 (RPPRSHSLRY…IMDNHNHSKE (92 aa)) are alpha-1. Topologically, residues 23-306 (RPPRSHSLRY…WEPSLSNTLV (284 aa)) are extracellular. Asparagine 110, asparagine 130, and asparagine 234 each carry an N-linked (GlcNAc...) asparagine glycan. The tract at residues 115 to 205 (SHTLQVILGC…ELGRGVLDQQ (91 aa)) is alpha-2. Cystine bridges form between cysteine 124-cysteine 187 and cysteine 225-cysteine 282. Positions 206-297 (VPPLVKVTHH…GLDQPLTATW (92 aa)) are alpha-3. Residues 207 to 296 (PPLVKVTHHV…PGLDQPLTAT (90 aa)) enclose the Ig-like C1-type domain. A connecting peptide region spans residues 298–306 (EPSLSNTLV). A helical transmembrane segment spans residues 307-330 (TGVISGIAVCVIIFLIGILFRILR). Topologically, residues 331–348 (KRQASRGAMGDYVLAECE) are cytoplasmic.

This sequence belongs to the MHC class I family. As to quaternary structure, binds TFR through the extracellular domain in a pH-dependent manner.

It localises to the cell membrane. Functionally, binds to transferrin receptor (TFR) and reduces its affinity for iron-loaded transferrin. This is Hereditary hemochromatosis protein homolog (HFE) from Rhinoceros unicornis (Greater Indian rhinoceros).